Here is a 169-residue protein sequence, read N- to C-terminus: Peptide deformylase (169 aa).

C91 and H133 together coordinate Fe cation. Residue E134 is part of the active site. H137 serves as a coordination point for Fe cation.

Belongs to the polypeptide deformylase family. Fe(2+) serves as cofactor.

The catalysed reaction is N-terminal N-formyl-L-methionyl-[peptide] + H2O = N-terminal L-methionyl-[peptide] + formate. Functionally, removes the formyl group from the N-terminal Met of newly synthesized proteins. Requires at least a dipeptide for an efficient rate of reaction. N-terminal L-methionine is a prerequisite for activity but the enzyme has broad specificity at other positions. The sequence is that of Peptide deformylase from Haemophilus influenzae (strain 86-028NP).